The chain runs to 91 residues: Early E3B 10.4 kDa protein (91 aa).

Positions 1 to 21 (MVTVLLIFLCLPVIFSSSTFA) are cleaved as a signal peptide. Residues 22 to 33 (AVSDLDPECLAP) are Lumenal-facing. A helical membrane pass occupies residues 34–56 (FAVYLIFTFVTATCVCSIITLLI). Over 57–91 (TSLQFFDYYYVRIVYRRHHPRYQNPQIAALLQLQP) the chain is Cytoplasmic.

Belongs to the adenoviridae E3B family.

The protein resides in the host endoplasmic reticulum membrane. Its function is as follows. Down-regulates the EGF receptor. This Homo sapiens (Human) protein is Early E3B 10.4 kDa protein.